Consider the following 138-residue polypeptide: Translation initiation factor 5A (138 aa).

The residue at position 37 (K37) is a Hypusine.

This sequence belongs to the eIF-5A family.

Its subcellular location is the cytoplasm. Functionally, functions by promoting the formation of the first peptide bond. In Pyrococcus furiosus (strain ATCC 43587 / DSM 3638 / JCM 8422 / Vc1), this protein is Translation initiation factor 5A.